We begin with the raw amino-acid sequence, 989 residues long: Vacuolar membrane protease (989 aa).

Positions 1–25 are disordered; that stretch reads MDRQSLRTTLRAMDASNENGSAKGA. Residues 1–41 lie on the Cytoplasmic side of the membrane; it reads MDRQSLRTTLRAMDASNENGSAKGAKKTTIGSFVRWTFGFN. The helical transmembrane segment at 42–62 threads the bilayer; that stretch reads SVPLTTLVTITTVLLGLLVYV. Over 63–383 the chain is Vacuolar; that stretch reads STSVNPPDVT…YLFIILPLQY (321 aa). Residues His-181 and Asp-193 each coordinate Zn(2+). Glu-227 serves as the catalytic Proton acceptor. Residue Glu-228 participates in Zn(2+) binding. The N-linked (GlcNAc...) asparagine glycan is linked to Asn-245. Zn(2+)-binding residues include Glu-253 and His-325. The helical transmembrane segment at 384–404 threads the bilayer; the sequence is IFVISCLTLAVGPIFVGFLFL. The Cytoplasmic segment spans residues 405-426; sequence LVLRKQINAGTSETILGGWLRS. Residues 427–447 traverse the membrane as a helical segment; the sequence is IVSVLVSVVATYFVVETLHLG. Residues 448–460 are Vacuolar-facing; sequence NELYVVRSFYTPL. A helical membrane pass occupies residues 461–481; it reads FAGLGTFIFVNYVLLGFFHFV. The Cytoplasmic segment spans residues 482–488; sequence RPVCDQK. The chain crosses the membrane as a helical span at residues 489–509; the sequence is LIILLELSVVLWVLLLLSVIH. The Vacuolar segment spans residues 510 to 520; it reads EATHKATGEYH. The helical transmembrane segment at 521–541 threads the bilayer; the sequence is FLILYIVVATASILGLFGHLV. The Cytoplasmic portion of the chain corresponds to 542 to 611; that stretch reads TSTETSTFVE…IAVSMGYDWS (70 aa). Residues 548–576 form a disordered region; the sequence is TFVEGPEDEEDTVDASEATETSPLLPEAS. The span at 552–561 shows a compositional bias: acidic residues; that stretch reads GPEDEEDTVD. A helical transmembrane segment spans residues 612–632; it reads IQFLLVVPITFFVTFGLAASL. The Vacuolar portion of the chain corresponds to 633–648; sequence LDGLHQTPLESEKSAD. A helical membrane pass occupies residues 649-669; that stretch reads FVYTTITAMSVLVGITFLPFV. The Cytoplasmic segment spans residues 670–673; it reads HKLQ. A helical transmembrane segment spans residues 674 to 694; that stretch reads VFVPIVVVGVAVTASFVHILS. Over 695–989 the chain is Vacuolar; the sequence is PPFSSNAPAK…LVEVSKYVEL (295 aa). Asn-745, Asn-793, and Asn-822 each carry an N-linked (GlcNAc...) asparagine glycan.

It belongs to the peptidase M28 family. The cofactor is Zn(2+).

Its subcellular location is the vacuole membrane. Functionally, may be involved in vacuolar sorting and osmoregulation. This Yarrowia lipolytica (strain CLIB 122 / E 150) (Yeast) protein is Vacuolar membrane protease.